The primary structure comprises 304 residues: Plasmodesmata-located protein 3 (304 aa).

Positions 1–26 (MGFYSLKQLLLLYIIIMALFSDLKLA) are cleaved as a signal peptide. The Extracellular segment spans residues 27 to 272 (KSSSPEYTNL…SSSSGTTGKT (246 aa)). 2 consecutive Gnk2-homologous domains span residues 34–138 (TNLI…ISGF) and 143–242 (GMEL…FYPN). 6 disulfides stabilise this stretch: Cys-41–Cys-116, Cys-92–Cys-101, Cys-104–Cys-129, Cys-151–Cys-220, Cys-196–Cys-205, and Cys-208–Cys-233. The chain crosses the membrane as a helical span at residues 273 to 293 (VAIIVGGTAGVGFLVICLLFV). The segment at 273–293 (VAIIVGGTAGVGFLVICLLFV) is necessary and sufficient for plasmodesmal targeting. Over 294–304 (KNLMKKKYDDY) the chain is Cytoplasmic.

The protein belongs to the cysteine-rich repeat secretory protein family. Plasmodesmata-located proteins (PDLD) subfamily. As to quaternary structure, (Microbial infection) Interacts with Grapevine fanleaf virus (GFLV) 2B-MP. Highly expressed in inflorescence pedacel and shoot apex. Expressed in the outermost L1 layer of the shoot apical meristem and in the epidermis of bulging floral primordia. Within the L1, expression was restricted to the peripheral zone (at protein level).

The protein localises to the cell membrane. The protein resides in the cell junction. Its subcellular location is the plasmodesma. In terms of biological role, modulates cell-to-cell trafficking. This Arabidopsis thaliana (Mouse-ear cress) protein is Plasmodesmata-located protein 3.